Reading from the N-terminus, the 225-residue chain is 3-dehydroquinate dehydratase (225 aa).

Residues Ser6, 30–32 (EWR), and Arg62 contribute to the 3-dehydroquinate site. His118 functions as the Proton donor/acceptor in the catalytic mechanism. Catalysis depends on Lys143, which acts as the Schiff-base intermediate with substrate. Residues Arg186, Ser205, and Gln209 each contribute to the 3-dehydroquinate site.

Belongs to the type-I 3-dehydroquinase family. As to quaternary structure, homodimer.

The enzyme catalyses 3-dehydroquinate = 3-dehydroshikimate + H2O. It participates in metabolic intermediate biosynthesis; chorismate biosynthesis; chorismate from D-erythrose 4-phosphate and phosphoenolpyruvate: step 3/7. Involved in the third step of the chorismate pathway, which leads to the biosynthesis of aromatic amino acids. Catalyzes the cis-dehydration of 3-dehydroquinate (DHQ) and introduces the first double bond of the aromatic ring to yield 3-dehydroshikimate. The protein is 3-dehydroquinate dehydratase of Streptococcus pneumoniae (strain Taiwan19F-14).